A 217-amino-acid polypeptide reads, in one-letter code: Probable GTP-binding protein EngB (217 aa).

Positions 44-217 constitute an EngB-type G domain; the sequence is DRIEVCFAGR…TLRTIVATLG (174 aa). Residues 52-59, 79-83, 97-100, 164-167, and 198-200 each bind GTP; these read GRSNVGKS, GRTQE, DLPG, TKAD, and TSS. The Mg(2+) site is built by Ser59 and Thr81.

The protein belongs to the TRAFAC class TrmE-Era-EngA-EngB-Septin-like GTPase superfamily. EngB GTPase family. Mg(2+) is required as a cofactor.

In terms of biological role, necessary for normal cell division and for the maintenance of normal septation. This chain is Probable GTP-binding protein EngB, found in Cereibacter sphaeroides (strain ATCC 17023 / DSM 158 / JCM 6121 / CCUG 31486 / LMG 2827 / NBRC 12203 / NCIMB 8253 / ATH 2.4.1.) (Rhodobacter sphaeroides).